The primary structure comprises 145 residues: Large ribosomal subunit protein uL13 (145 aa).

It belongs to the universal ribosomal protein uL13 family. In terms of assembly, part of the 50S ribosomal subunit.

This protein is one of the early assembly proteins of the 50S ribosomal subunit, although it is not seen to bind rRNA by itself. It is important during the early stages of 50S assembly. In Bacillus thuringiensis (strain Al Hakam), this protein is Large ribosomal subunit protein uL13.